Here is a 131-residue protein sequence, read N- to C-terminus: MDYLWIMIGSALGGAARFWVTGFVAEQTGGIFPWGTVLINVSGSFLIGFFGSLTGAEGRFVVGESARLFVMIGLCGGFTTFSSFSLQTLNLMRQGEMIRAGGNIALSVVFCLLAVWLGHVVAVAINQMKGA.

Helical transmembrane passes span 4–24 (LWIMIGSALGGAARFWVTGFV), 30–50 (GIFPWGTVLINVSGSFLIGFF), 68–88 (LFVMIGLCGGFTTFSSFSLQT), and 104–124 (IALSVVFCLLAVWLGHVVAVA). Residues Gly76 and Thr79 each coordinate Na(+).

The protein belongs to the fluoride channel Fluc/FEX (TC 1.A.43) family.

It localises to the cell inner membrane. It carries out the reaction fluoride(in) = fluoride(out). With respect to regulation, na(+) is not transported, but it plays an essential structural role and its presence is essential for fluoride channel function. In terms of biological role, fluoride-specific ion channel. Important for reducing fluoride concentration in the cell, thus reducing its toxicity. This Methylocella silvestris (strain DSM 15510 / CIP 108128 / LMG 27833 / NCIMB 13906 / BL2) protein is Fluoride-specific ion channel FluC.